The chain runs to 256 residues: Ribonuclease 3 (256 aa).

The region spanning Leu-3–Gly-125 is the RNase III domain. Residue Glu-38 coordinates Mg(2+). Asp-42 is a catalytic residue. 2 residues coordinate Mg(2+): Asp-111 and Glu-114. Glu-114 is a catalytic residue. In terms of domain architecture, DRBM spans Asp-152 to Arg-222. The interval Gln-226–Glu-256 is disordered.

The protein belongs to the ribonuclease III family. In terms of assembly, homodimer. The cofactor is Mg(2+).

It localises to the cytoplasm. It catalyses the reaction Endonucleolytic cleavage to 5'-phosphomonoester.. Functionally, digests double-stranded RNA. Involved in the processing of primary rRNA transcript to yield the immediate precursors to the large and small rRNAs (23S and 16S). Processes some mRNAs, and tRNAs when they are encoded in the rRNA operon. Processes pre-crRNA and tracrRNA of type II CRISPR loci if present in the organism. In Ralstonia pickettii (strain 12J), this protein is Ribonuclease 3.